Reading from the N-terminus, the 204-residue chain is Glycerol-3-phosphate acyltransferase (204 aa).

5 consecutive transmembrane segments (helical) span residues 8–28, 53–73, 81–101, 116–136, and 155–175; these read ILIFAYLLGSINSAIIVCYIF, VPAAITLIFDILKGLVPVVIA, FITACTALYAILGHIFPIFFG, FGFSWILGLIFVITWLCVAII, and VIFTSDLQVAAPFLIIAIIIL.

This sequence belongs to the PlsY family. Probably interacts with PlsX.

The protein localises to the cell inner membrane. The catalysed reaction is an acyl phosphate + sn-glycerol 3-phosphate = a 1-acyl-sn-glycero-3-phosphate + phosphate. It functions in the pathway lipid metabolism; phospholipid metabolism. Catalyzes the transfer of an acyl group from acyl-phosphate (acyl-PO(4)) to glycerol-3-phosphate (G3P) to form lysophosphatidic acid (LPA). This enzyme utilizes acyl-phosphate as fatty acyl donor, but not acyl-CoA or acyl-ACP. This is Glycerol-3-phosphate acyltransferase from Francisella tularensis subsp. mediasiatica (strain FSC147).